Reading from the N-terminus, the 401-residue chain is S-adenosylmethionine synthase (401 aa).

136–141 (GQGSVD) lines the ATP pocket.

The protein belongs to the AdoMet synthase 2 family. Requires Mg(2+) as cofactor.

It carries out the reaction L-methionine + ATP + H2O = S-adenosyl-L-methionine + phosphate + diphosphate. It functions in the pathway amino-acid biosynthesis; S-adenosyl-L-methionine biosynthesis; S-adenosyl-L-methionine from L-methionine: step 1/1. Its function is as follows. Catalyzes the formation of S-adenosylmethionine from methionine and ATP. This is S-adenosylmethionine synthase (mat) from Pyrococcus abyssi (strain GE5 / Orsay).